A 210-amino-acid chain; its full sequence is Probable nicotinate-nucleotide adenylyltransferase (210 aa).

This sequence belongs to the NadD family.

It catalyses the reaction nicotinate beta-D-ribonucleotide + ATP + H(+) = deamido-NAD(+) + diphosphate. It participates in cofactor biosynthesis; NAD(+) biosynthesis; deamido-NAD(+) from nicotinate D-ribonucleotide: step 1/1. Catalyzes the reversible adenylation of nicotinate mononucleotide (NaMN) to nicotinic acid adenine dinucleotide (NaAD). The polypeptide is Probable nicotinate-nucleotide adenylyltransferase (Streptococcus pyogenes serotype M3 (strain ATCC BAA-595 / MGAS315)).